A 435-amino-acid chain; its full sequence is Astacin-like metalloendopeptidase (435 aa).

A signal peptide spans 1-23; that stretch reads MGIMGSLWPWILTMLSLLGLSMG. The region spanning 85-282 is the Peptidase M12A domain; it reads RLLSVTNNKW…TRVCRLYNCS (198 aa). 2 disulfide bridges follow: C132–C281 and C153–C172. H182 serves as a coordination point for Zn(2+). E183 is a catalytic residue. Zn(2+)-binding residues include H186 and H192. The segment covering 318–329 has biased composition (low complexity); sequence SEESGSSAPSGS. Residues 318 to 356 are disordered; it reads SEESGSSAPSGSRTGGQSIAGLGNSQQGWEHPPQSTFSV. A compositionally biased stretch (polar residues) spans 340–355; sequence GNSQQGWEHPPQSTFS.

As to quaternary structure, interacts (via N-terminal domain) with SPACA3; the interaction occurs during fertilization. Requires Zn(2+) as cofactor. Ovary-specific. Expressed in secondary, antral and Graafian follicle oocytes. Expressed in the egg cells. Not detected in two-cell embryos. Not detected in naked oocytes, oocytes in primordial or unilaminar primary follicles, or in any other ovarian cells at pre-pubertal, pubertal or adult stages (at protein level). Ovary-specific.

The protein localises to the cytoplasm. Its subcellular location is the cell membrane. It localises to the cytoplasmic vesicle. It is found in the secretory vesicle. The protein resides in the cortical granule. Inhibited by wide spectrum metalloproteinase inhibitor batimastat (BB-94). Also inhibited by EDTA. In terms of biological role, oocyte-specific oolemmal receptor involved in sperm and egg adhesion and fertilization. Plays a role in the polyspermy inhibition. Probably acts as a protease for the post-fertilization cleavage of ZP2. Cleaves the sperm-binding ZP2 at the surface of the zona pellucida after fertilization and cortical granule exocytosis, rendering the zona pellucida unable to support further sperm binding. The protein is Astacin-like metalloendopeptidase of Mus musculus (Mouse).